We begin with the raw amino-acid sequence, 504 residues long: Signal transduction histidine-protein kinase/phosphatase MprB (504 aa).

At 1–26 (MWWFRRRDRAPLRATSSLSLRWRVML) the chain is on the cytoplasmic side. Residues 27–47 (LAMSMVAMVVVLMSFAVYAVI) traverse the membrane as a helical segment. Topologically, residues 48 to 163 (SAALYSDIDN…PTEAVMNKLR (116 aa)) are extracellular. The chain crosses the membrane as a helical span at residues 164–184 (WVLLIVGGIGVAVAAVAGGMV). Topologically, residues 185 to 504 (TRAGLRPVGR…SVESQSTRAT (320 aa)) are cytoplasmic. The 53-residue stretch at 186–238 (RAGLRPVGRLTEAAERVARTDDLRPIPVFGSDELARLTEAFNLMLRALAESRE) folds into the HAMP domain. One can recognise a Histidine kinase domain in the interval 246-466 (DAGHELRTPL…SIYVLLPGRR (221 aa)). H249 is modified (phosphohistidine; by autocatalysis). The interval 471–504 (QLPGATAGARSTDIENSRGSANVISVESQSTRAT) is disordered. Residues 487–504 (SRGSANVISVESQSTRAT) are compositionally biased toward polar residues.

Mg(2+) is required as a cofactor. It depends on Mn(2+) as a cofactor. Autophosphorylated.

The protein resides in the cell membrane. The enzyme catalyses ATP + protein L-histidine = ADP + protein N-phospho-L-histidine.. In terms of biological role, member of the two-component regulatory system MprB/MprA which contributes to maintaining a balance among several systems involved in stress resistance and is required for establishment and maintenance of persistent infection in the host. In response to environmental signals MprB acts both as a membrane-associated protein kinase that undergoes autophosphorylation and subsequently transfers the phosphate to MprA, and a protein phosphatase that dephosphorylates phospho-MprA. MprB/MprA up-regulates expression of mprA and pepD. The polypeptide is Signal transduction histidine-protein kinase/phosphatase MprB (mprB) (Mycobacterium bovis (strain ATCC BAA-935 / AF2122/97)).